Reading from the N-terminus, the 709-residue chain is ATP-dependent zinc metalloprotease YME1 homolog (709 aa).

Residues 152–182 form a disordered region; the sequence is FTSDTSSTVSSTPSLNHSLQNSMPPSTPTPP. Residues 153–165 show a composition bias toward low complexity; the sequence is TSDTSSTVSSTPS. Residues 217 to 239 form a helical membrane-spanning segment; sequence IFKFIAGLSVASYFVLLGMSIFA. 307–314 contributes to the ATP binding site; that stretch reads GPPGTGKT. His-530 provides a ligand contact to Zn(2+). Residue Glu-531 is part of the active site. Zn(2+)-binding residues include His-534 and Asp-608.

In the N-terminal section; belongs to the AAA ATPase family. It in the C-terminal section; belongs to the peptidase M41 family. Zn(2+) is required as a cofactor.

The protein resides in the mitochondrion membrane. In terms of biological role, putative ATP-dependent protease. The polypeptide is ATP-dependent zinc metalloprotease YME1 homolog (Schizosaccharomyces pombe (strain 972 / ATCC 24843) (Fission yeast)).